The chain runs to 621 residues: Cystathionine gamma-synthase (621 aa).

At K429 the chain carries N6-(pyridoxal phosphate)lysine.

It belongs to the trans-sulfuration enzymes family. MET7 subfamily. As to quaternary structure, both met-3 and met-7 are required to form a functional cystathionine gamma-synthase. The cofactor is pyridoxal 5'-phosphate.

It carries out the reaction O-succinyl-L-homoserine + L-cysteine = L,L-cystathionine + succinate + H(+). Its pathway is amino-acid biosynthesis; L-methionine biosynthesis via de novo pathway; L-cystathionine from O-succinyl-L-homoserine: step 1/1. In terms of biological role, catalyzes the formation of L-cystathionine from O-succinyl-L-homoserine (OSHS) and L-cysteine, via a gamma-replacement reaction. In the absence of thiol, catalyzes gamma-elimination to form 2-oxobutanoate, succinate and ammonia. This is Cystathionine gamma-synthase (met-7) from Neurospora crassa (strain ATCC 24698 / 74-OR23-1A / CBS 708.71 / DSM 1257 / FGSC 987).